Consider the following 72-residue polypeptide: Bradykinin-potentiating peptide BmKbpp (72 aa).

The signal sequence occupies residues 1 to 22 (MNKKTLLVIFFVTMLIVDEVNS). The propeptide occupies 70 to 72 (RRR).

This sequence belongs to the non-disulfide-bridged peptide (NDBP) superfamily. Long chain multifunctional peptide (group 2) family. In terms of tissue distribution, expressed by the venom gland.

Its subcellular location is the secreted. Its function is as follows. Amphipathic peptide that shows bradykinin potentiating activity and antimicrobial activities against bacteria and fungi. Has higher antibacterial activities against Gram-negative than against Gram-positive bacteria. Also inhibits NADPH oxidase-dependent superoxide production (IC(50) is 0.4 uM on granulocytes stimulated with PMA, IC(50) is 0.51 uM on HL-60 cells undifferentiated and IC(50) is 0.53 uM on HL-60 cells treated with DMSO). The C-terminal peptide shows a higher bradykinin potentiating activity than the complete peptide. This chain is Bradykinin-potentiating peptide BmKbpp, found in Olivierus martensii (Manchurian scorpion).